The chain runs to 818 residues: Serine/threonine-protein kinase PTK2/STK2 (818 aa).

The segment covering 28-39 has biased composition (polar residues); the sequence is NSSSHTDNSSLL. Disordered stretches follow at residues 28–100 and 117–177; these read NSSS…GSVS and NPYL…SHHF. Thr56 carries the phosphothreonine modification. Residues 57 to 81 are compositionally biased toward low complexity; the sequence is SPSISGSGSGGNSPSSSAGARQRSA. 2 positions are modified to phosphoserine: Ser59 and Ser80. Over residues 136-160 the composition is skewed to basic and acidic residues; the sequence is TRDRDRAVLDREKEKERARNKERNT. The Protein kinase domain occupies 255–562; that stretch reads DTDNKPIGSG…MDDLFNDPFF (308 aa). ATP is bound by residues 261 to 269 and Lys285; that span reads IGSGGSSEV. Asp388 functions as the Proton acceptor in the catalytic mechanism. The span at 585 to 595 shows a compositional bias: polar residues; sequence STSTNDFSENS. Residues 585–795 form a disordered region; it reads STSTNDFSEN…SVSSSKKKKV (211 aa). A phosphoserine mark is found at Ser623 and Ser632. Basic and acidic residues-rich tracts occupy residues 638–651 and 659–685; these read KVKDSAKTKTHDVG and TKPKQQDKKENLKKDEVKNGDKDKVIE. Ser694 carries the phosphoserine modification. Thr700 bears the Phosphothreonine mark. Phosphoserine is present on Ser711. Residues 727–736 show a composition bias toward low complexity; that stretch reads TPTTPTHNGP. Thr737 carries the post-translational modification Phosphothreonine. A phosphoserine mark is found at Ser752, Ser755, Ser778, and Ser781. A compositionally biased stretch (polar residues) spans 755–767; the sequence is SLKSETPASTKNF. The span at 768-789 shows a compositional bias: low complexity; that stretch reads SAPNVSSSSNSLRSLGSPSVSS.

It belongs to the protein kinase superfamily. Ser/Thr protein kinase family.

It localises to the nucleus. Its subcellular location is the cytoplasm. It carries out the reaction L-seryl-[protein] + ATP = O-phospho-L-seryl-[protein] + ADP + H(+). The catalysed reaction is L-threonyl-[protein] + ATP = O-phospho-L-threonyl-[protein] + ADP + H(+). Its function is as follows. Essential determinant for high-affinity spermidine transport. Required for the activation of the plasma membrane proton pump PMA1 via phosphorylation of 'Ser-899'. The sequence is that of Serine/threonine-protein kinase PTK2/STK2 (PTK2) from Saccharomyces cerevisiae (strain ATCC 204508 / S288c) (Baker's yeast).